A 165-amino-acid chain; its full sequence is Myosin regulatory light chain 2, ventricular/cardiac muscle isoform (165 aa).

Serine 2 is subject to N,N,N-trimethylserine. Asparagine 14 carries the post-translational modification Deamidated asparagine. A phosphoserine mark is found at serine 15 and serine 19. 3 consecutive EF-hand domains span residues 24–59 (TQIQ…LGRV), 94–129 (DPEE…QAER), and 130–165 (FSKD…GEEK). Residues aspartate 37, asparagine 39, aspartate 41, and aspartate 48 each contribute to the Ca(2+) site. At threonine 52 the chain carries Phosphothreonine.

In terms of assembly, myosin is a hexamer of 2 heavy chains and 4 light chains. Interacts with MYOC. In terms of processing, N-terminus is methylated by METTL11A/NTM1. Post-translationally, phosphorylated by MYLK3 and MYLK2; promotes cardiac muscle contraction and function. Dephosphorylated by PPP1CB complexed to PPP1R12B. The phosphorylated form in adult is expressed as gradients across the heart from endocardium (low phosphorylation) to epicardium (high phosphorylation); regulates cardiac torsion and workload distribution.

The protein resides in the cytoplasm. It is found in the myofibril. It localises to the sarcomere. Its subcellular location is the a band. Contractile protein that plays a role in heart development and function. Following phosphorylation, plays a role in cross-bridge cycling kinetics and cardiac muscle contraction by increasing myosin lever arm stiffness and promoting myosin head diffusion; as a consequence of the increase in maximum contraction force and calcium sensitivity of contraction force. These events altogether slow down myosin kinetics and prolong duty cycle resulting in accumulated myosins being cooperatively recruited to actin binding sites to sustain thin filament activation as a means to fine-tune myofilament calcium sensitivity to force. During cardiogenesis plays an early role in cardiac contractility by promoting cardiac myofibril assembly. The chain is Myosin regulatory light chain 2, ventricular/cardiac muscle isoform from Oryctolagus cuniculus (Rabbit).